The sequence spans 82 residues: Sulfur carrier protein TusA (82 aa).

The Cysteine persulfide intermediate role is filled by Cys-20.

The protein belongs to the sulfur carrier protein TusA family.

The protein localises to the cytoplasm. Functionally, sulfur carrier protein which probably makes part of a sulfur-relay system. The sequence is that of Sulfur carrier protein TusA from Aeromonas hydrophila subsp. hydrophila (strain ATCC 7966 / DSM 30187 / BCRC 13018 / CCUG 14551 / JCM 1027 / KCTC 2358 / NCIMB 9240 / NCTC 8049).